We begin with the raw amino-acid sequence, 62 residues long: Metallothionein (62 aa).

Met-1 is subject to N-acetylmethionine. The interval 1–30 (MDPQDCKCETGASCSCGTTCSCSNCKCTSC) is beta. The a divalent metal cation site is built by Cys-6, Cys-8, Cys-14, Cys-16, Cys-20, Cys-22, Cys-25, Cys-27, Cys-30, Cys-34, Cys-35, Cys-37, Cys-38, Cys-42, Cys-45, Cys-49, Cys-51, Cys-58, Cys-60, and Cys-61. The segment at 31-62 (KKSCCSCCPAECSKCSQGCHCEKGSKKCSCCN) is alpha.

It belongs to the metallothionein superfamily. Type 1 family.

Metallothioneins have a high content of cysteine residues that bind various heavy metals. This Xenopus laevis (African clawed frog) protein is Metallothionein (mt-a).